A 101-amino-acid polypeptide reads, in one-letter code: Urease subunit beta (101 aa).

The protein belongs to the urease beta subunit family. As to quaternary structure, heterotrimer of UreA (gamma), UreB (beta) and UreC (alpha) subunits. Three heterotrimers associate to form the active enzyme.

The protein localises to the cytoplasm. The catalysed reaction is urea + 2 H2O + H(+) = hydrogencarbonate + 2 NH4(+). The protein operates within nitrogen metabolism; urea degradation; CO(2) and NH(3) from urea (urease route): step 1/1. In Pseudomonas paraeruginosa (strain DSM 24068 / PA7) (Pseudomonas aeruginosa (strain PA7)), this protein is Urease subunit beta.